The chain runs to 20 residues: Cytochrome P450IIB (20 aa).

This sequence belongs to the cytochrome P450 family. Heme serves as cofactor.

The protein localises to the endoplasmic reticulum membrane. Its subcellular location is the microsome membrane. It carries out the reaction an organic molecule + reduced [NADPH--hemoprotein reductase] + O2 = an alcohol + oxidized [NADPH--hemoprotein reductase] + H2O + H(+). Cytochromes P450 are a group of heme-thiolate monooxygenases. In liver microsomes, this enzyme is involved in an NADPH-dependent electron transport pathway. This isozyme is active upon P.nitroanisole, aniline, D-benzphetamine, delta(9)-tetrahydrocannabinol (THC) and strychnine. The protein is Cytochrome P450IIB of Cavia porcellus (Guinea pig).